Here is a 621-residue protein sequence, read N- to C-terminus: Zinc metalloproteinase-disintegrin-like TSV-DM (621 aa).

The signal sequence occupies residues 1 to 20 (MIQVLLVTICLAVFPYQGSS). The propeptide occupies 21 to 191 (IILESGNVND…EASQSNLTPE (171 aa)). A Pyrrolidone carboxylic acid modification is found at Gln192. A Peptidase M12B domain is found at 200 to 396 (KYVKFFLVAD…NMPQCILKKP (197 aa)). A glycan (N-linked (GlcNAc...) asparagine) is linked at Asn219. Cystine bridges form between Cys311–Cys391, Cys351–Cys375, and Cys353–Cys358. A Zn(2+)-binding site is contributed by His336. Glu337 is an active-site residue. Residues His340 and His346 each contribute to the Zn(2+) site. The Disintegrin domain maps to 404 to 489 (PPVCGNYFVE…AECTDRFQRN (86 aa)). Residues Val406, Asn409, Phe411, Glu413, Glu416, and Asp419 each coordinate Ca(2+). Intrachain disulfides connect Cys407–Cys436, Cys418–Cys431, Cys420–Cys426, Cys430–Cys453, Cys444–Cys450, Cys449–Cys475, Cys462–Cys482, Cys469–Cys500, Cys493–Cys505, Cys512–Cys562, Cys527–Cys573, Cys540–Cys550, Cys557–Cys599, and Cys593–Cys605. The D/ECD-tripeptide motif lies at 468–470 (ECD). Ca(2+)-binding residues include Asp470, Met471, Asp473, Asp484, and Arg485. Asn502 is a glycosylation site (N-linked (GlcNAc...) asparagine).

The protein belongs to the venom metalloproteinase (M12B) family. P-III subfamily. P-IIIc sub-subfamily. As to quaternary structure, homodimer; disulfide-linked. The cofactor is Zn(2+). Post-translationally, the N-terminus is blocked. As to expression, expressed by the venom gland.

Its subcellular location is the secreted. With respect to regulation, inhibited by EDTA and DTT, and partially inhibited by EGTA, but not inhibited by PMSF and NEM. Snake venom zinc metalloprotease that hydrolyzes the alpha-chain (FGA) and more slowly the beta-chain (FGB) of fibrinogen. Inhibits cell proliferation and induces cell morphologic changes transiently on human umbilical vein endothelial cells. The sequence is that of Zinc metalloproteinase-disintegrin-like TSV-DM from Trimeresurus stejnegeri (Chinese green tree viper).